Consider the following 124-residue polypeptide: Ribonuclease pancreatic (124 aa).

2 residues coordinate substrate: Lys7 and Arg10. His12 functions as the Proton acceptor in the catalytic mechanism. Intrachain disulfides connect Cys26–Cys84, Cys40–Cys95, Cys58–Cys110, and Cys65–Cys72. The N-linked (GlcNAc...) asparagine glycan is linked to Asn34. Substrate-binding positions include 41-45, Lys66, and Arg85; that span reads KPVNT. His119 acts as the Proton donor in catalysis.

The protein belongs to the pancreatic ribonuclease family. Monomer. Interacts with and forms tight 1:1 complexes with RNH1. Dimerization of two such complexes may occur. Interaction with RNH1 inhibits this protein. As to expression, pancreas.

The protein resides in the secreted. It catalyses the reaction an [RNA] containing cytidine + H2O = an [RNA]-3'-cytidine-3'-phosphate + a 5'-hydroxy-ribonucleotide-3'-[RNA].. The enzyme catalyses an [RNA] containing uridine + H2O = an [RNA]-3'-uridine-3'-phosphate + a 5'-hydroxy-ribonucleotide-3'-[RNA].. Endonuclease that catalyzes the cleavage of RNA on the 3' side of pyrimidine nucleotides. Acts on single-stranded and double-stranded RNA. The polypeptide is Ribonuclease pancreatic (RNASE1) (Eudorcas thomsonii (Thomson's gazelle)).